Consider the following 227-residue polypeptide: Uracil-DNA glycosylase 2 (227 aa).

The active-site Proton acceptor is the aspartate 67.

It belongs to the uracil-DNA glycosylase (UDG) superfamily. UNG family.

It is found in the cytoplasm. It catalyses the reaction Hydrolyzes single-stranded DNA or mismatched double-stranded DNA and polynucleotides, releasing free uracil.. Excises uracil residues from the DNA which can arise as a result of misincorporation of dUMP residues by DNA polymerase or due to deamination of cytosine. The sequence is that of Uracil-DNA glycosylase 2 (ung2) from Streptomyces avermitilis (strain ATCC 31267 / DSM 46492 / JCM 5070 / NBRC 14893 / NCIMB 12804 / NRRL 8165 / MA-4680).